The sequence spans 393 residues: 4-hydroxyphenylpyruvate dioxygenase (393 aa).

T2 carries the N-acetylthreonine modification. VOC domains lie at 18-149 (HFHS…LVEK) and 180-338 (MIDH…IFTK). The residue at position 132 (K132) is an N6-succinyllysine. H183 lines the Fe cation pocket. 3 positions are modified to phosphoserine: S211, S226, and S250. H266 and E349 together coordinate Fe cation.

It belongs to the 4HPPD family. In terms of assembly, homodimer. It depends on Fe cation as a cofactor.

It is found in the cytoplasm. The protein localises to the endoplasmic reticulum membrane. Its subcellular location is the golgi apparatus membrane. It carries out the reaction 3-(4-hydroxyphenyl)pyruvate + O2 = homogentisate + CO2. Its pathway is amino-acid degradation; L-phenylalanine degradation; acetoacetate and fumarate from L-phenylalanine: step 3/6. Catalyzes the conversion of 4-hydroxyphenylpyruvic acid to homogentisic acid, one of the steps in tyrosine catabolism. This chain is 4-hydroxyphenylpyruvate dioxygenase (HPD), found in Homo sapiens (Human).